Consider the following 707-residue polypeptide: MFFLDNTDSMTSSSRGITMPNTISSHEDVGGYSPRKVGIQHDYSAVGGGGAAFHHLHTSAATPRHVATSEFYDDEEATSPRGGIEIGAGGGKMMANLRRHRQRERETYEDEDVLSSSDESSGRPIPRYVGRDTDHVFGEFEMDDEDVVMRREDGYGEDETDEDYFDEEEPVAELLPLGGGTRRVPRTPGRKNSSKCGFFDYYKLTDEHLGSGAYGSVTTCKSIKSGVEYAVKIVDKQGETHSRKRILREVNIFKTCKDHPNIVQLLDWFEDETNFYLVMEKMRGGPLLQHILQRKYFTEEEARRVTKDISLALKFMHDRGIAHRDVKPENVLCTDPNHVSPVKLCDLDLASQRPPQHERHPLSQVASEPDLASPVGSAEFMAPEVVDAYVGDSLKYDKKCDTWSLGVILYIMLAGYAPFQGMCDDEDCGWSEGKPCEDCQQDLFHRIQDGYYEFPEEEWGMISEEAKDLVSNLLKRDPVDRFNADQILSHRWLQQSAASTILQTPSNLINRKDSARDVQQMSEHFNLMNRLADTRLSARFDNKMTMSECGSDLGTATIHGDGSFLSMGGEPFGTFPRKKSVGIAIEKSRSGEFTPPISRASPTTPPPSMLNLSEDLTDSPVKRRSADDSGTFSLFSPASSNGDDSICSPPMVFVDMPSIQLFGTGALLTSVQMTPRHTTEDDASLKSFEDEQENANPIHRIETQVNV.

Over residues 1–24 the composition is skewed to polar residues; sequence MFFLDNTDSMTSSSRGITMPNTIS. 2 disordered regions span residues 1–29 and 101–131; these read MFFL…HEDV and RQRE…YVGR. The Protein kinase domain occupies 203–493; that stretch reads KLTDEHLGSG…ADQILSHRWL (291 aa). ATP-binding positions include 209–217 and Lys232; that span reads LGSGAYGSV. The active-site Proton acceptor is Asp325. Disordered stretches follow at residues 589–628 and 688–707; these read RSGE…SADD and FEDE…QVNV.

It belongs to the protein kinase superfamily. CAMK Ser/Thr protein kinase family. Mg(2+) is required as a cofactor. As to expression, expressed in pharynx, intestine, vulva and body wall muscles.

The protein localises to the nucleus. It is found in the cytoplasm. It carries out the reaction L-seryl-[protein] + ATP = O-phospho-L-seryl-[protein] + ADP + H(+). The catalysed reaction is L-threonyl-[protein] + ATP = O-phospho-L-threonyl-[protein] + ADP + H(+). In terms of biological role, serine/threonine-protein kinase which is required in the germline to positively regulate lifespan. May play a role in body wall muscle contraction. May be involved in embryonic cytokinesis. The chain is MAP kinase-interacting serine/threonine-protein kinase mnk-1 from Caenorhabditis elegans.